We begin with the raw amino-acid sequence, 237 residues long: Ribonuclease PH (237 aa).

Phosphate-binding positions include arginine 86 and glycine 124–arginine 126.

The protein belongs to the RNase PH family. Homohexameric ring arranged as a trimer of dimers.

The enzyme catalyses tRNA(n+1) + phosphate = tRNA(n) + a ribonucleoside 5'-diphosphate. In terms of biological role, phosphorolytic 3'-5' exoribonuclease that plays an important role in tRNA 3'-end maturation. Removes nucleotide residues following the 3'-CCA terminus of tRNAs; can also add nucleotides to the ends of RNA molecules by using nucleoside diphosphates as substrates, but this may not be physiologically important. Probably plays a role in initiation of 16S rRNA degradation (leading to ribosome degradation) during starvation. The sequence is that of Ribonuclease PH from Bradyrhizobium diazoefficiens (strain JCM 10833 / BCRC 13528 / IAM 13628 / NBRC 14792 / USDA 110).